Consider the following 512-residue polypeptide: Chitin synthase regulatory factor 2 (512 aa).

Sel1-like repeat units follow at residues 224-260 (SEAL…DLNH), 261-296 (VQAA…SGQH), 297-333 (VGAM…LEAD), 337-377 (PQAL…KYGL), 378-414 (KDAQ…RKRN), and 415-452 (PEAM…YKNH). Cysteine 509 carries the cysteine methyl ester modification. A lipid anchor (S-farnesyl cysteine) is attached at cysteine 509. Residues 510 to 512 (IIS) constitute a propeptide, removed in mature form.

The protein localises to the membrane. Its function is as follows. Involved in chitin biosynthesis. The polypeptide is Chitin synthase regulatory factor 2 (chr2) (Schizosaccharomyces pombe (strain 972 / ATCC 24843) (Fission yeast)).